The chain runs to 284 residues: Tropomyosin (284 aa).

Met-1 carries the post-translational modification N-acetylmethionine. A disordered region spans residues 1-42 (MDAIKKKMQAMKLEKDNAMDRADTLEQQNKEANNRAEKSEEE). Positions 1–284 (MDAIKKKMQA…DQTFSELSGY (284 aa)) form a coiled coil. The span at 12–38 (KLEKDNAMDRADTLEQQNKEANNRAEK) shows a compositional bias: basic and acidic residues.

The protein belongs to the tropomyosin family. As to quaternary structure, homodimer.

Tropomyosin, in association with the troponin complex, plays a central role in the calcium dependent regulation of muscle contraction. This Pandalus borealis (Northern red shrimp) protein is Tropomyosin.